We begin with the raw amino-acid sequence, 329 residues long: Sex comb on midleg-like protein 1 (329 aa).

The segment at 136–160 (SYSPTLPVSRRENNSPSNLPRPSFC) is disordered. Phosphoserine occurs at positions 138 and 238. The SAM domain maps to 258 to 325 (WSVEAVVLFL…YYIDRLKQGK (68 aa)).

The protein belongs to the SCM family.

The protein localises to the nucleus. In terms of biological role, putative Polycomb group (PcG) protein. PcG proteins act by forming multiprotein complexes, which are required to maintain the transcriptionally repressive state of homeotic genes throughout development. May be involved in spermatogenesis during sexual maturation. This is Sex comb on midleg-like protein 1 (SCML1) from Pongo pygmaeus (Bornean orangutan).